The following is a 253-amino-acid chain: 5'-nucleotidase SurE (253 aa).

The a divalent metal cation site is built by Asp8, Asp9, Ser39, and Asn92.

Belongs to the SurE nucleotidase family. The cofactor is a divalent metal cation.

It localises to the cytoplasm. The enzyme catalyses a ribonucleoside 5'-phosphate + H2O = a ribonucleoside + phosphate. Functionally, nucleotidase that shows phosphatase activity on nucleoside 5'-monophosphates. In Burkholderia thailandensis (strain ATCC 700388 / DSM 13276 / CCUG 48851 / CIP 106301 / E264), this protein is 5'-nucleotidase SurE.